The chain runs to 551 residues: Chaperonin GroEL 4 (551 aa).

Residues 30 to 33 (TLGP), K51, 87 to 91 (DGTTT), G415, and D495 each bind ATP.

This sequence belongs to the chaperonin (HSP60) family. Forms a cylinder of 14 subunits composed of two heptameric rings stacked back-to-back. Interacts with the co-chaperonin GroES.

Its subcellular location is the cytoplasm. It carries out the reaction ATP + H2O + a folded polypeptide = ADP + phosphate + an unfolded polypeptide.. Functionally, together with its co-chaperonin GroES, plays an essential role in assisting protein folding. The GroEL-GroES system forms a nano-cage that allows encapsulation of the non-native substrate proteins and provides a physical environment optimized to promote and accelerate protein folding. This is Chaperonin GroEL 4 from Mesorhizobium japonicum (strain LMG 29417 / CECT 9101 / MAFF 303099) (Mesorhizobium loti (strain MAFF 303099)).